The primary structure comprises 58 residues: UPF0391 membrane protein Maqu_2901 (58 aa).

2 consecutive transmembrane segments (helical) span residues tryptophan 4–alanine 24 and alanine 28–valine 48.

Belongs to the UPF0391 family.

The protein resides in the cell membrane. The protein is UPF0391 membrane protein Maqu_2901 of Marinobacter nauticus (strain ATCC 700491 / DSM 11845 / VT8) (Marinobacter aquaeolei).